A 70-amino-acid polypeptide reads, in one-letter code: UPF0352 protein PSHAa1818 (70 aa).

The protein belongs to the UPF0352 family.

This Pseudoalteromonas translucida (strain TAC 125) protein is UPF0352 protein PSHAa1818.